Reading from the N-terminus, the 207-residue chain is Phosphatidylinositol phosphate synthase (207 aa).

The next 2 helical transmembrane spans lie at 21–44 (LRAH…MALI) and 50–67 (WLWQ…SDSL). 28 to 31 (DVVT) provides a ligand contact to a CDP-1,2-diacyl-sn-glycerol. 2 residues coordinate Mg(2+): Asp65 and Asp68. A CDP-1,2-diacyl-sn-glycerol contacts are provided by Gly69, Arg73, and Ser79. Mg(2+) contacts are provided by Asp86 and Asp90. A run of 4 helical transmembrane segments spans residues 88–106 (TLDR…LYFA), 112–131 (VLWT…TSYV), 152–170 (RLLV…RVGA), and 176–195 (VVAL…ITVV). Catalysis depends on Asp90, which acts as the Proton acceptor.

Belongs to the CDP-alcohol phosphatidyltransferase class-I family. As to quaternary structure, homodimer. Mg(2+) serves as cofactor.

It is found in the cell membrane. The enzyme catalyses a CDP-1,2-diacyl-sn-glycerol + 1D-myo-inositol 3-phosphate = a 1,2-diacyl-sn-glycero-3-phospho-(1D-myo-inositol-3-phosphate) + CMP + H(+). The catalysed reaction is 1,2-di-(9Z-octadecenoyl)-sn-glycero-3-cytidine-5'-diphosphate + 1D-myo-inositol 3-phosphate = 1,2-di-(9Z-octadecenoyl)-sn-glycero-3-phospho-(1D-myo-inositol-3-phosphate) + CMP + H(+). Its pathway is phospholipid metabolism; phosphatidylinositol phosphate biosynthesis. Catalyzes the conjugation of the 1'-hydroxyl group of D-myo-inositol-3-phosphate (also named L-myo-inositol-1-phosphate) with a lipid tail of cytidine diphosphate diacylglycerol (CDP-DAG), forming phosphatidylinositol phosphate (PIP) and CMP. PIP is a precursor of phosphatidylinositol (PI) which is an essential lipid required for cell wall formation. The sequence is that of Phosphatidylinositol phosphate synthase from Cutibacterium acnes (strain DSM 16379 / KPA171202) (Propionibacterium acnes).